We begin with the raw amino-acid sequence, 335 residues long: 2-keto-3-deoxygluconate permease (335 aa).

Transmembrane regions (helical) follow at residues 10-30, 42-62, 77-97, 100-120, 141-161, 163-183, 200-220, 224-244, 254-274, and 289-309; these read IPGG…TAAP, GIIT…GASI, LVLT…QLLP, GIEV…AMDM, AFVL…LGSA, LASF…IGFA, QTLI…GVIL, LLGI…LIIA, TAGL…VIIA, and ALVA…TAMY.

This sequence belongs to the KdgT transporter family.

The protein localises to the cell inner membrane. It catalyses the reaction 2-dehydro-3-deoxy-D-gluconate(in) + H(+)(in) = 2-dehydro-3-deoxy-D-gluconate(out) + H(+)(out). Catalyzes the proton-dependent uptake of 2-keto-3-deoxygluconate (KDG) into the cell. The chain is 2-keto-3-deoxygluconate permease from Tolumonas auensis (strain DSM 9187 / NBRC 110442 / TA 4).